The following is a 198-amino-acid chain: Probable chemoreceptor glutamine deamidase CheD (198 aa).

It belongs to the CheD family.

The enzyme catalyses L-glutaminyl-[protein] + H2O = L-glutamyl-[protein] + NH4(+). Probably deamidates glutamine residues to glutamate on methyl-accepting chemotaxis receptors (MCPs), playing an important role in chemotaxis. The protein is Probable chemoreceptor glutamine deamidase CheD of Xanthomonas campestris pv. campestris (strain 8004).